Reading from the N-terminus, the 259-residue chain is DNA-directed RNA polymerase subunit Rpo3 (259 aa).

This sequence belongs to the archaeal Rpo3/eukaryotic RPB3 RNA polymerase subunit family. As to quaternary structure, part of the RNA polymerase complex.

Its subcellular location is the cytoplasm. The catalysed reaction is RNA(n) + a ribonucleoside 5'-triphosphate = RNA(n+1) + diphosphate. Its function is as follows. DNA-dependent RNA polymerase (RNAP) catalyzes the transcription of DNA into RNA using the four ribonucleoside triphosphates as substrates. This Pyrococcus horikoshii (strain ATCC 700860 / DSM 12428 / JCM 9974 / NBRC 100139 / OT-3) protein is DNA-directed RNA polymerase subunit Rpo3.